Here is a 34-residue protein sequence, read N- to C-terminus: Hemopexin (34 aa).

The disordered stretch occupies residues 1-25 (RPLTQHKPHTPGDEHPHGAEPPGXD).

It belongs to the hemopexin family. Expressed by the liver and secreted in plasma.

The protein localises to the secreted. In terms of biological role, binds heme and transports it to the liver for breakdown and iron recovery, after which the free hemopexin returns to the circulation. The sequence is that of Hemopexin (HPX) from Gallus gallus (Chicken).